A 501-amino-acid polypeptide reads, in one-letter code: Sucrose transport protein SUT2 (501 aa).

Residues 1–31 lie on the Cytoplasmic side of the membrane; that stretch reads MPRRPSGGGGGAGPAAAAVRKVPLRKLLRAA. Residues 32–52 form a helical membrane-spanning segment; it reads SVACGVQFGWALQLSLLTPYV. Residues 53-55 lie on the Extracellular side of the membrane; it reads QEL. The helical transmembrane segment at 56-76 threads the bilayer; the sequence is GIPHAFASLVWLCGPLSGLLV. Residues 77-98 lie on the Cytoplasmic side of the membrane; that stretch reads QPLVGHLSDRIAPAASPLGRRR. Residues 99–119 traverse the membrane as a helical segment; sequence PFIAAGAASIAAAVLTVGFSA. The Extracellular segment spans residues 120–135; it reads DLGRIFGDSITPGSTR. Residues 136-156 traverse the membrane as a helical segment; the sequence is LGAIIVYLVGFWLLDVGNNAT. Over 157-176 the chain is Cytoplasmic; the sequence is QGPCRAFLADLTENDPRRTR. Residues 177-197 form a helical membrane-spanning segment; it reads IANAYFSLFMALGNILGYATG. Residues 198-222 are Extracellular-facing; sequence AYSGWYKIFPFTVTPSCSISCANLK. A helical membrane pass occupies residues 223-243; that stretch reads SAFLLDIIILVVTTCITVASV. The Cytoplasmic segment spans residues 244–278; the sequence is QEPQSFGSDEADHPSTEQEAFLWELFGSFRYFTLP. A helical membrane pass occupies residues 279–299; the sequence is VWMVLIVTALTWIGWFPFILF. At 300–327 the chain is on the extracellular side; sequence DTDWMGREIYRGSPDDPSITQSYHDGVR. Residues 328–348 form a helical membrane-spanning segment; it reads MGSFGLMLNSVLLGFTSIVLE. At 349–356 the chain is on the cytoplasmic side; the sequence is KLCRKWGA. Residues 357–377 traverse the membrane as a helical segment; sequence GLVWGVSNILMALCFVAMLVI. Residues 378–394 are Extracellular-facing; that stretch reads TYVAKNMDYPPSGVPPT. Residues 395 to 415 traverse the membrane as a helical segment; sequence GIVIASLVVFTILGAPLAITY. Over 416–433 the chain is Cytoplasmic; sequence SIPYAMAASRVENLGLGQ. The helical transmembrane segment at 434–454 threads the bilayer; that stretch reads GLAMGILNLAIVIPQVIVSLG. At 455-467 the chain is on the extracellular side; that stretch reads SGPWDQLFGGGNA. A helical membrane pass occupies residues 468 to 488; that stretch reads PAFAVAAAASFIGGLVAILGL. Residues 489–501 are Cytoplasmic-facing; the sequence is PRARIASRRRGHR.

The protein belongs to the glycoside-pentoside-hexuronide (GPH) cation symporter transporter (TC 2.A.2.4) family. In terms of assembly, homodimer. In terms of tissue distribution, widely expressed.

It localises to the cell membrane. It functions in the pathway glycan biosynthesis; sucrose metabolism. Responsible for the transport of sucrose into the cell, with the concomitant uptake of protons (symport system). May also transport other glucosides. This is Sucrose transport protein SUT2 (SUT2) from Oryza sativa subsp. japonica (Rice).